A 155-amino-acid polypeptide reads, in one-letter code: Phosphoprotein pp24 (155 aa).

A disordered region spans residues 1-50 (MEFEAEHEGLTASWVAPAPQGGKGAEGRAGVADEAGHGKTEAECAEDGEK). Over residues 34–50 (EAGHGKTEAECAEDGEK) the composition is skewed to basic and acidic residues. A coiled-coil region spans residues 76 to 107 (RKRIEAKYMDLLVEAERENKNLRKKYNIILDV).

This chain is Phosphoprotein pp24 (MDV008), found in Gallus gallus (Chicken).